Reading from the N-terminus, the 200-residue chain is Putative protein ATXN8OS (200 aa).

Residues 19–39 form a disordered region; sequence PFSGLKEEEEEDGEDDEEEEE. A compositionally biased stretch (acidic residues) spans 25–39; the sequence is EEEEEDGEDDEEEEE.

As to expression, expressed in brain. Expressed in muscle tissues (at protein level).

The protein localises to the cytoplasm. The protein is Putative protein ATXN8OS of Homo sapiens (Human).